The sequence spans 180 residues: V-type proton ATPase subunit c''1 (180 aa).

Topologically, residues Met1–Ser26 are lumenal. Residues Ala27 to Ile47 form a helical membrane-spanning segment. The Cytoplasmic segment spans residues Thr48–Asn66. A helical membrane pass occupies residues Leu67–Leu87. Residues Gln88 to Ala110 are Lumenal-facing. A helical transmembrane segment spans residues Ile111 to Ile131. The Cytoplasmic portion of the chain corresponds to Ile132–Lys149. The helical transmembrane segment at Ile150–Ile170 threads the bilayer. Over Met171–Lys180 the chain is Lumenal.

This sequence belongs to the V-ATPase proteolipid subunit family. As to quaternary structure, V-ATPase is a heteromultimeric enzyme composed of a peripheral catalytic V1 complex (components A to H) attached to an integral membrane V0 proton pore complex (components: a, c, c'', d and e). The proteolipid components c and c'' are present as a hexameric ring that forms the proton-conducting pore. In terms of tissue distribution, preferentially expressed in roots.

It is found in the endoplasmic reticulum membrane. The protein localises to the golgi apparatus membrane. In terms of biological role, proton-conducting pore forming subunit of the membrane integral V0 complex of vacuolar ATPase. V-ATPase is responsible for acidifying a variety of intracellular compartments in eukaryotic cells. The chain is V-type proton ATPase subunit c''1 (VHA-c''1) from Arabidopsis thaliana (Mouse-ear cress).